The following is a 96-amino-acid chain: uncharacterized protein (96 aa).

A helical membrane pass occupies residues 13–35 (PVVRYVVALLHWLLWRVVVIIAI).

The protein resides in the membrane. This is an uncharacterized protein from Archaeoglobus fulgidus (strain ATCC 49558 / DSM 4304 / JCM 9628 / NBRC 100126 / VC-16).